We begin with the raw amino-acid sequence, 66 residues long: Spore coat protein C (66 aa).

It to B.subtilis protein YnzH.

The sequence is that of Spore coat protein C (cotC) from Bacillus subtilis (strain 168).